Reading from the N-terminus, the 460-residue chain is 3-isopropylmalate dehydratase large subunit (460 aa).

Residues Cys341, Cys401, and Cys404 each contribute to the [4Fe-4S] cluster site.

It belongs to the aconitase/IPM isomerase family. LeuC type 1 subfamily. As to quaternary structure, heterodimer of LeuC and LeuD. [4Fe-4S] cluster serves as cofactor.

It carries out the reaction (2R,3S)-3-isopropylmalate = (2S)-2-isopropylmalate. The protein operates within amino-acid biosynthesis; L-leucine biosynthesis; L-leucine from 3-methyl-2-oxobutanoate: step 2/4. Catalyzes the isomerization between 2-isopropylmalate and 3-isopropylmalate, via the formation of 2-isopropylmaleate. In Phocaeicola vulgatus (strain ATCC 8482 / DSM 1447 / JCM 5826 / CCUG 4940 / NBRC 14291 / NCTC 11154) (Bacteroides vulgatus), this protein is 3-isopropylmalate dehydratase large subunit.